We begin with the raw amino-acid sequence, 207 residues long: MVEAFKGTTTVGIVCDGGVVLASESRATMGSFIASRTAKKIYQIDDLVGLTTAGVVGDAQALVRMIQAEARLYRMQRGEPLTIKAITSLLSNILSARRYFPFLVQLVVGGVDKMGPKIFSLDALGGQIEEHDIVSTGSGSPIAYGVLESLYKPGLSIQDGSVLCVRAVHTAMKRDSASGNGIALVRITKDRYEEVPTSEVEEIVRSL.

A propeptide spans 1 to 7 (removed in mature form; by autocatalysis); that stretch reads MVEAFKG. The active-site Nucleophile is T8.

It belongs to the peptidase T1B family. As to quaternary structure, the 20S proteasome core is composed of 14 alpha and 14 beta subunits that assemble into four stacked heptameric rings, resulting in a barrel-shaped structure. The two inner rings, each composed of seven catalytic beta subunits, are sandwiched by two outer rings, each composed of seven alpha subunits. The catalytic chamber with the active sites is on the inside of the barrel. Has a gated structure, the ends of the cylinder being occluded by the N-termini of the alpha-subunits. Is capped at one or both ends by the proteasome regulatory ATPase, PAN.

The protein localises to the cytoplasm. The enzyme catalyses Cleavage of peptide bonds with very broad specificity.. With respect to regulation, the formation of the proteasomal ATPase PAN-20S proteasome complex, via the docking of the C-termini of PAN into the intersubunit pockets in the alpha-rings, triggers opening of the gate for substrate entry. Interconversion between the open-gate and close-gate conformations leads to a dynamic regulation of the 20S proteasome proteolysis activity. Its function is as follows. Component of the proteasome core, a large protease complex with broad specificity involved in protein degradation. This chain is Proteasome subunit beta, found in Methanothrix thermoacetophila (strain DSM 6194 / JCM 14653 / NBRC 101360 / PT) (Methanosaeta thermophila).